Reading from the N-terminus, the 352-residue chain is MIEIDGSYGEGGGQLVRTAVALSAVTGEEIKVTNIRENRPNPGLKQQHLKALETAAKICGARVSGLSQGSSELFFAPVEIKGGKYNIDIGTAGSITLLLQCIMPALPFVEEKVELTIRGGTDVAWSPTIDYLKHVTLRALEQFGYAGSVTLKERGYYPRGGGSVSAVFEPCKLHGFHFRKTEGNKKTESNPVGEGLKGEKSMMEEIIGVSHASNLPAHVPARQAESARSLFLEAGYDARIDVSSSEFFSTGSGITLWKGYCGGSALGKKGLPAEKVGRQAAEEVIKELRAGAAVDIHLADQLIPYMALAGNSSFTVRELTLHAATNIWVTEQFLDVKFKIKEKEGLFEVSVG.

Residues Gln-100 and His-297 to Gln-301 contribute to the ATP site. His-322 functions as the Tele-AMP-histidine intermediate in the catalytic mechanism.

The protein belongs to the RNA 3'-terminal cyclase family. Type 1 subfamily.

It is found in the cytoplasm. The enzyme catalyses a 3'-end 3'-phospho-ribonucleotide-RNA + ATP = a 3'-end 2',3'-cyclophospho-ribonucleotide-RNA + AMP + diphosphate. Catalyzes the conversion of 3'-phosphate to a 2',3'-cyclic phosphodiester at the end of RNA. The mechanism of action of the enzyme occurs in 3 steps: (A) adenylation of the enzyme by ATP; (B) transfer of adenylate to an RNA-N3'P to produce RNA-N3'PP5'A; (C) and attack of the adjacent 2'-hydroxyl on the 3'-phosphorus in the diester linkage to produce the cyclic end product. The biological role of this enzyme is unknown but it is likely to function in some aspects of cellular RNA processing. This chain is RNA 3'-terminal phosphate cyclase, found in Methanosarcina mazei (strain ATCC BAA-159 / DSM 3647 / Goe1 / Go1 / JCM 11833 / OCM 88) (Methanosarcina frisia).